We begin with the raw amino-acid sequence, 154 residues long: NADPH-dependent 7-cyano-7-deazaguanine reductase (154 aa).

Residue cysteine 54 is the Thioimide intermediate of the active site. The Proton donor role is filled by aspartate 61. Substrate is bound by residues 76–78 (VES) and 95–96 (HE).

The protein belongs to the GTP cyclohydrolase I family. QueF type 1 subfamily.

It localises to the cytoplasm. The catalysed reaction is 7-aminomethyl-7-carbaguanine + 2 NADP(+) = 7-cyano-7-deazaguanine + 2 NADPH + 3 H(+). It participates in tRNA modification; tRNA-queuosine biosynthesis. Its function is as follows. Catalyzes the NADPH-dependent reduction of 7-cyano-7-deazaguanine (preQ0) to 7-aminomethyl-7-deazaguanine (preQ1). The polypeptide is NADPH-dependent 7-cyano-7-deazaguanine reductase (Porphyromonas gingivalis (strain ATCC 33277 / DSM 20709 / CIP 103683 / JCM 12257 / NCTC 11834 / 2561)).